Consider the following 201-residue polypeptide: LexA repressor 1 (201 aa).

The H-T-H motif DNA-binding region spans 27 to 47 (LAEIAQAFGFASRNAAQKHVQ). Catalysis depends on for autocatalytic cleavage activity residues Ser122 and Lys159.

It belongs to the peptidase S24 family. As to quaternary structure, homodimer.

It carries out the reaction Hydrolysis of Ala-|-Gly bond in repressor LexA.. In terms of biological role, represses a number of genes involved in the response to DNA damage (SOS response), including recA and lexA. In the presence of single-stranded DNA, RecA interacts with LexA causing an autocatalytic cleavage which disrupts the DNA-binding part of LexA, leading to derepression of the SOS regulon and eventually DNA repair. This Xanthomonas oryzae pv. oryzae (strain KACC10331 / KXO85) protein is LexA repressor 1.